The following is a 259-amino-acid chain: Bacillaene synthase dehydratase PksH (259 aa).

Residues Asp68 and Glu137 contribute to the active site.

The protein belongs to the enoyl-CoA hydratase/isomerase family.

It localises to the cytoplasm. Its pathway is antibiotic biosynthesis; bacillaene biosynthesis. Involved in some intermediate steps for the synthesis of the antibiotic polyketide bacillaene which is involved in secondary metabolism. Catalyzes the dehydration of the (S)-3-hydroxy-3-methylglutaryl group tethered to PksL to a 3-methylglutaconyl moiety. This chain is Bacillaene synthase dehydratase PksH (pksH), found in Bacillus subtilis (strain 168).